Consider the following 656-residue polypeptide: Macrolide export ATP-binding/permease protein MacB (656 aa).

The region spanning 6-244 (LEVSACYRSF…AAPKTEVIPA (239 aa)) is the ABC transporter domain. 42–49 (GASGSGKS) lines the ATP pocket. 4 helical membrane passes run 277–297 (FLTMLGIIIGIASVVSVVALG), 531–551 (LLISAIAVISLVVGGIGVMNI), 586–606 (LVCLCGGALGVALAYLIGVVF), and 621–641 (SIVAAFACSTLIGVLFGFLPA).

This sequence belongs to the ABC transporter superfamily. Macrolide exporter (TC 3.A.1.122) family. As to quaternary structure, homodimer. Part of the tripartite efflux system MacAB-TolC, which is composed of an inner membrane transporter, MacB, a periplasmic membrane fusion protein, MacA, and an outer membrane component, TolC. The complex forms a large protein conduit and can translocate molecules across both the inner and outer membranes. Interacts with MacA.

The protein localises to the cell inner membrane. In terms of biological role, part of the tripartite efflux system MacAB-TolC. MacB is a non-canonical ABC transporter that contains transmembrane domains (TMD), which form a pore in the inner membrane, and an ATP-binding domain (NBD), which is responsible for energy generation. Confers resistance against macrolides. The chain is Macrolide export ATP-binding/permease protein MacB from Shewanella sp. (strain ANA-3).